The sequence spans 207 residues: Dephospho-CoA kinase (207 aa).

One can recognise a DPCK domain in the interval 12–207 (LIGITGMIGG…LYSTLLGKML (196 aa)). 20–25 (GGGKST) contributes to the ATP binding site.

It belongs to the CoaE family.

Its subcellular location is the cytoplasm. The catalysed reaction is 3'-dephospho-CoA + ATP = ADP + CoA + H(+). It functions in the pathway cofactor biosynthesis; coenzyme A biosynthesis; CoA from (R)-pantothenate: step 5/5. Its function is as follows. Catalyzes the phosphorylation of the 3'-hydroxyl group of dephosphocoenzyme A to form coenzyme A. This chain is Dephospho-CoA kinase, found in Leptospira interrogans serogroup Icterohaemorrhagiae serovar copenhageni (strain Fiocruz L1-130).